The following is a 228-amino-acid chain: Uracil-DNA glycosylase (228 aa).

The active-site Proton acceptor is the Asp64.

It belongs to the uracil-DNA glycosylase (UDG) superfamily. UNG family.

Its subcellular location is the cytoplasm. It carries out the reaction Hydrolyzes single-stranded DNA or mismatched double-stranded DNA and polynucleotides, releasing free uracil.. Excises uracil residues from the DNA which can arise as a result of misincorporation of dUMP residues by DNA polymerase or due to deamination of cytosine. The chain is Uracil-DNA glycosylase from Pectobacterium atrosepticum (strain SCRI 1043 / ATCC BAA-672) (Erwinia carotovora subsp. atroseptica).